Consider the following 2609-residue polypeptide: Mycosubtilin synthase subunit C (2609 aa).

The tract at residues 258–1628 is domain 1 (D-serine-activating); that stretch reads PREKTIHQLF…RVCAQPEMTV (1371 aa). The segment at 288–695 is adenylation 1; that stretch reads TYQELNEKAN…HIPSIQESIV (408 aa). Positions 771–845 constitute a Carrier 1 domain; it reads APRTELEKIL…ELVPYVEPVT (75 aa). The residue at position 806 (S806) is an O-(pantetheine 4'-phosphoryl)serine. Residues 853–1312 form an epimerization 1 region; sequence IKGPALLTPI…EISIDELDQF (460 aa). The tract at residues 1322 to 1623 is condensation 1; that stretch reads IENIYPLTPM…NTIPVRVCAQ (302 aa). Residues 1778 to 2359 form a domain 2 (isoleucine-activating) region; sequence PKEKTIYQLF…AHAIQAAALP (582 aa). The segment at 1808–2205 is adenylation 2; sequence TYRQLNEQAN…LVESVKEAVV (398 aa). Residues 2282–2357 enclose the Carrier 2 domain; the sequence is APRTLIEKQL…TMAHAIQAAA (76 aa). S2317 bears the O-(pantetheine 4'-phosphoryl)serine mark. The thioesterase stretch occupies residues 2375 to 2581; it reads IPVFCFPPLI…ENMSTIRSIM (207 aa).

This sequence belongs to the ATP-dependent AMP-binding enzyme family. It depends on pantetheine 4'-phosphate as a cofactor.

Functionally, this protein is a multifunctional enzyme, able to activate and polymerize the amino acids Ser and Asn as part of the synthesis of mycosubtilin. The Ser residue is further epimerized to the D-isomer form. The activation sites for these amino acids consist of individual domains. The chain is Mycosubtilin synthase subunit C (mycC) from Bacillus subtilis.